The chain runs to 182 residues: GTP cyclohydrolase 1 (182 aa).

Zn(2+)-binding residues include C73, H76, and C144.

It belongs to the GTP cyclohydrolase I family. As to quaternary structure, homomer.

It carries out the reaction GTP + H2O = 7,8-dihydroneopterin 3'-triphosphate + formate + H(+). Its pathway is cofactor biosynthesis; 7,8-dihydroneopterin triphosphate biosynthesis; 7,8-dihydroneopterin triphosphate from GTP: step 1/1. This is GTP cyclohydrolase 1 from Hydrogenobaculum sp. (strain Y04AAS1).